The chain runs to 128 residues: Con-Ins F2c (128 aa).

The N-terminal stretch at M1 to G24 is a signal peptide. Intrachain disulfides connect C29–C104, C41–C107, C53–C120, and C106–C111. A propeptide spans L59–R89 (c peptide). E115 bears the 4-carboxyglutamate; partial mark. Serine amide is present on S127.

It belongs to the insulin family. As to quaternary structure, heterodimer of A and B chains; disulfide-linked. As to expression, expressed by the venom gland.

It is found in the secreted. Functionally, this venom insulin facilitates prey capture by rapidly inducing hypoglycemic shock. Intraperitoneal injection of this peptide into zebrafish lowers blood glucose with the same potency than human insulin. In vivo, when applied to water, this peptide reduces overall locomotor activity of zebrafish larvae, observed as a significant decrease in the percentage of time spent swimming and movement frequency. The chain is Con-Ins F2c from Conus floridulus (Cone snail).